The sequence spans 270 residues: Protein-ADP-ribose hydrolase (270 aa).

Positions 73 to 267 constitute a Macro domain; sequence VSVKDCQKTN…LYDTYLQKEN (195 aa). The ADP-D-ribose site is built by Asp92, Ile93, and Asn106. Cys112, His117, and Cys119 together coordinate Zn(2+). Cys119, Ile120, Asp121, Ser212, Thr213, Gly214, Glu215, and Phe216 together coordinate ADP-D-ribose.

It belongs to the MacroD-type family. Zn-Macro subfamily. Zn(2+) serves as cofactor.

The enzyme catalyses 4-O-(ADP-D-ribosyl)-L-aspartyl-[protein] + H2O = L-aspartyl-[protein] + ADP-D-ribose + H(+). Functionally, ADP-ribosylhydrolase that specifically reverses the SirTM-mediated mono-ADP-ribosylation at an asparatate residue of GcvH-L, by releasing ADP-ribose from the target protein. May play a role in the regulation of the response to host-induced oxidative stress. This Streptococcus pyogenes serotype M6 (strain ATCC BAA-946 / MGAS10394) protein is Protein-ADP-ribose hydrolase.